A 264-amino-acid chain; its full sequence is MERQQIIESLRRIIPTESTEYNERLISLGESFLEWSKYKHNLKATEELCRPYMAAHLACELLSNDLNLEINLLATPIPKKKYYKLFTYFQEILSPLTKSLAAKDDLMETITYLCTKLGGSTAIPYVKQLVKAVVTNDMRIEHKRGIIIAAYLLVSAKAFGKDELHINHTERRKAQSVLQDTSSALQIQYWMHVLSESWQYKEIPLNGIEGYESQKQRIKPWSGIASMIQIDYEKRLQNYPIWKACIEERIQYYKSQLEKDGTAS.

Belongs to the ORC6 family. As to quaternary structure, ORC is composed of six subunits. ORC interacts with cdc18, recruiting it to the ars1 origin of replication.

It localises to the nucleus. In terms of biological role, component of the origin recognition complex (ORC) that binds origins of replication. It has a role in both chromosomal replication and mating type transcriptional silencing. ORC binds to multiple sites within the ars1 origin of DNA replication in an ATP-independent manner. This is Origin recognition complex subunit 6 (orc6) from Schizosaccharomyces pombe (strain 972 / ATCC 24843) (Fission yeast).